The chain runs to 470 residues: Probable citrate synthase, mitochondrial (470 aa).

Active-site residues include His-297, His-351, and Asp-406.

It belongs to the citrate synthase family. As to quaternary structure, homodimer.

The protein localises to the mitochondrion matrix. It catalyses the reaction oxaloacetate + acetyl-CoA + H2O = citrate + CoA + H(+). Its pathway is carbohydrate metabolism; tricarboxylic acid cycle; isocitrate from oxaloacetate: step 1/2. In Leishmania braziliensis, this protein is Probable citrate synthase, mitochondrial.